The chain runs to 304 residues: Non-specific ribonucleoside hydrolase RihC (304 aa).

H233 is a catalytic residue.

Belongs to the IUNH family. RihC subfamily.

Hydrolyzes both purine and pyrimidine ribonucleosides with a broad-substrate specificity. The polypeptide is Non-specific ribonucleoside hydrolase RihC (Shigella sonnei (strain Ss046)).